The primary structure comprises 547 residues: Cytochrome P450 monooxygenase fsoD (547 aa).

A helical transmembrane segment spans residues 3–23; sequence DITLAAVSIGLFFYVGARAVL. C490 provides a ligand contact to heme.

The protein belongs to the cytochrome P450 family. The cofactor is heme.

Its subcellular location is the membrane. The enzyme catalyses isomotiol + reduced [NADPH--hemoprotein reductase] + O2 = 2alpha-hydroxyisomotiol + oxidized [NADPH--hemoprotein reductase] + H2O + H(+). The protein operates within secondary metabolite biosynthesis; terpenoid biosynthesis. Functionally, cytochrome P450 monooxygenase; part of the gene cluster that mediates the biosynthesis of the enfumafungin-type antibiotic, fuscoatroside. Within the pathway, fsoD catalyzes the hydroxylation at position C2 of isomotiol to produce 2-alpha-hydroxy-isomotiol. FsoD may also hydroxylate the intermediates 3-O-(beta-D-glucopyranosyl)-isomotiol and 2-deacetoxy-fuscoatroside at the same position C2. The fuscoatroside biosynthesis is initiated by the cyclization of 2,3(S)-oxidosqualene through FsoA's terpene cyclase (TC) domain, leading to the formation of the fernane skeleton isomotiol, harboring a fernane triterpene skeleton with a C8-C9 double bond. Subsequently, C2-alpha-hydroxylation mediated by fsoD results in the production of 2-alpha-hydroxy-isomotiol, which is further acetylated by fsoF. The glycosyltransferase (GT) domain of FsoA may convert isomotiol, 2-alpha-hydroxy-isomotiol, and the acetylated derivative of 2-alpha-hydroxy-isomotiol into their corresponding glycosides 3-O-(beta-D-glucopyranosyl)-isomotiol, 3-O-(beta-D-glucopyranosyl)-2-alpha-hydroxy-isomotiol, and 3-O-(beta-D-glucopyranosyl)-2-alpha-acetoxy-isomotiol, which then undergo oxidative cleavage under the action of fsoE to form s 2-deacetoxy-fuscoatroside, 2-deacetyl-fuscoatroside, and fuscoatroside, respectively. Although hydroxylation followed by acetylation of 3-O-(beta-D-glucopyranosyl)-isomotiol and 2-deacetoxy-fuscoatroside by fsoD and fsoF could not be ruled out, this process is likely to occur with difficulty due to bulky steric hindrance caused by the presence of a glycan at C3 in these compounds. Interestingly, fsoE can also utilize the aglycones isomotiol and 2-alpha-hydroxy-isomotiol as substrates to generate 19-beta-hydroxy-isomotiol and 2-alpha,19-beta-dihydroxy-isomotiol, respectively. These reactions occur with lower efficiency. Finally, fsoE can further convert 2-alpha,19-beta-dihydroxy-isomotiol into 2-alpha-hydroxy-ismotiol-19-one and 2-alpha-hydroxy-ismotiol-19-one into 2-deacetyl-3-deglucopyranosyl-fuscoatroside. In Humicola fuscoatra, this protein is Cytochrome P450 monooxygenase fsoD.